We begin with the raw amino-acid sequence, 92 residues long: Large ribosomal subunit protein eL43 (92 aa).

Positions 39, 42, 57, and 60 each coordinate Zn(2+).

Belongs to the eukaryotic ribosomal protein eL43 family. Component of the large ribosomal subunit. Mature ribosomes consist of a small (40S) and a large (60S) subunit. The 40S subunit contains 32 different proteins and 1 molecule of RNA (18S). The 60S subunit contains 45 different proteins and 3 molecules of RNA (25S, 5.8S and 5S). It depends on Zn(2+) as a cofactor.

Its subcellular location is the cytoplasm. In terms of biological role, component of the ribosome, a large ribonucleoprotein complex responsible for the synthesis of proteins in the cell. The small ribosomal subunit (SSU) binds messenger RNAs (mRNAs) and translates the encoded message by selecting cognate aminoacyl-transfer RNA (tRNA) molecules. The large subunit (LSU) contains the ribosomal catalytic site termed the peptidyl transferase center (PTC), which catalyzes the formation of peptide bonds, thereby polymerizing the amino acids delivered by tRNAs into a polypeptide chain. The nascent polypeptides leave the ribosome through a tunnel in the LSU and interact with protein factors that function in enzymatic processing, targeting, and the membrane insertion of nascent chains at the exit of the ribosomal tunnel. This Candida albicans (strain SC5314 / ATCC MYA-2876) (Yeast) protein is Large ribosomal subunit protein eL43.